Reading from the N-terminus, the 84-residue chain is Succinate dehydrogenase membrane anchor subunit (84 aa).

Residues 1 to 3 (MIT) are Mitochondrial matrix-facing. The helical transmembrane segment at 4-24 (FQWLIVRVVALFISLTILIDI) threads the bilayer. Residues 25 to 31 (EMFVVML) lie on the Mitochondrial intermembrane side of the membrane. A helical transmembrane segment spans residues 32-52 (SFLIIHISIGLKAIIHDYIHF). H37 serves as a coordination point for heme. Residue Y49 participates in a ubiquinone binding. At 53–58 (QKIKLM) the chain is on the mitochondrial matrix side. Residues 59-81 (LLILLRVSAIEISRSFRTFYIII) traverse the membrane as a helical segment. The Mitochondrial intermembrane portion of the chain corresponds to 82–84 (KNT).

As to quaternary structure, part of an enzyme complex containing four subunits: a flavoprotein, an iron-sulfur protein, plus two membrane-anchoring proteins. Requires heme as cofactor.

It localises to the mitochondrion inner membrane. It participates in carbohydrate metabolism; tricarboxylic acid cycle. Its function is as follows. Membrane-anchoring subunit of succinate dehydrogenase (SDH). In Chondrus crispus (Carrageen Irish moss), this protein is Succinate dehydrogenase membrane anchor subunit (SDH4).